We begin with the raw amino-acid sequence, 400 residues long: Octopine dehydrogenase (400 aa).

Residues 10–13 (GGNG) and 35–38 (FADE) each bind NADH. Residues Q118 and T143 each contribute to the pyruvate site. Q118 contacts substrate. C148 is an NAD(+) binding site. M206 provides a ligand contact to L-arginine. Pyruvate is bound at residue H212. Residue H212 is part of the active site. Residue R324 participates in NAD(+) binding.

It belongs to the lysopine/nopaline/octopine/opine/vitopine dehydrogenases family.

The enzyme catalyses D-octopine + NAD(+) + H2O = L-arginine + pyruvate + NADH + H(+). In terms of biological role, catalyzes the reverse reaction of octopine dehydrogenation. Acts on L-arginine in preference to other substrates. In Mizuhopecten yessoensis (Japanese scallop), this protein is Octopine dehydrogenase.